The primary structure comprises 553 residues: Adenine deaminase (553 aa).

The protein belongs to the metallo-dependent hydrolases superfamily. Adenine deaminase family. Requires Mn(2+) as cofactor.

It catalyses the reaction adenine + H2O + H(+) = hypoxanthine + NH4(+). This Methanosarcina acetivorans (strain ATCC 35395 / DSM 2834 / JCM 12185 / C2A) protein is Adenine deaminase.